The chain runs to 486 residues: Probable cytosol aminopeptidase (486 aa).

It belongs to the peptidase M17 family. It depends on Mn(2+) as a cofactor.

It is found in the cytoplasm. The enzyme catalyses Release of an N-terminal amino acid, Xaa-|-Yaa-, in which Xaa is preferably Leu, but may be other amino acids including Pro although not Arg or Lys, and Yaa may be Pro. Amino acid amides and methyl esters are also readily hydrolyzed, but rates on arylamides are exceedingly low.. It carries out the reaction Release of an N-terminal amino acid, preferentially leucine, but not glutamic or aspartic acids.. Its function is as follows. Presumably involved in the processing and regular turnover of intracellular proteins. Catalyzes the removal of unsubstituted N-terminal amino acids from various peptides. The sequence is that of Probable cytosol aminopeptidase (pepA) from Synechococcus elongatus (strain ATCC 33912 / PCC 7942 / FACHB-805) (Anacystis nidulans R2).